The following is an 829-amino-acid chain: Periplasmic nitrate reductase (829 aa).

Positions 1–36 (MARRDFIKQTAAAAAATVAGVPLTGYTQNIVTESEA) form a signal peptide, tat-type signal. A 4Fe-4S Mo/W bis-MGD-type domain is found at 39–95 (LKWSKAPCRFCGTGCGVNVAVKDNQVVATHGDFNAEVNKGLNCVKGYFLSKIMYGSD). [4Fe-4S] cluster-binding residues include Cys-46, Cys-49, Cys-53, and Cys-81. Mo-bis(molybdopterin guanine dinucleotide) contacts are provided by residues Lys-83, Gln-150, Asn-175, Cys-179, 212–219 (WGSNMAEM), 243–247 (STFEH), 262–264 (QSD), Met-373, Gln-377, Asn-483, 509–510 (SD), Lys-532, Asp-559, and 719–728 (TGRVLEHWHS). Residue Trp-795 coordinates substrate. Mo-bis(molybdopterin guanine dinucleotide)-binding residues include Asn-803 and Lys-820.

It belongs to the prokaryotic molybdopterin-containing oxidoreductase family. NasA/NapA/NarB subfamily. In terms of assembly, component of the periplasmic nitrate reductase NapAB complex composed of NapA and NapB. The cofactor is [4Fe-4S] cluster. Mo-bis(molybdopterin guanine dinucleotide) serves as cofactor. Predicted to be exported by the Tat system. The position of the signal peptide cleavage has not been experimentally proven.

Its subcellular location is the periplasm. The catalysed reaction is 2 Fe(II)-[cytochrome] + nitrate + 2 H(+) = 2 Fe(III)-[cytochrome] + nitrite + H2O. Functionally, catalytic subunit of the periplasmic nitrate reductase complex NapAB. Receives electrons from NapB and catalyzes the reduction of nitrate to nitrite. The sequence is that of Periplasmic nitrate reductase from Bordetella bronchiseptica (strain ATCC BAA-588 / NCTC 13252 / RB50) (Alcaligenes bronchisepticus).